The following is a 180-amino-acid chain: Stathmin-3 (180 aa).

2 S-palmitoyl cysteine lipidation sites follow: Cys22 and Cys24. The SLD domain occupies 38–180; it reads GDMEVKQLDK…NKEQREEMSG (143 aa). Phosphoserine occurs at positions 50, 60, 65, 68, 72, 73, and 81. The segment at 59-82 is disordered; that stretch reads KSPSDLSPESPMLSSPPKKKDTSL. The span at 60–74 shows a compositional bias: low complexity; that stretch reads SPSDLSPESPMLSSP. A coiled-coil region spans residues 76 to 179; the sequence is KKKDTSLEEL…RNKEQREEMS (104 aa).

This sequence belongs to the stathmin family. Interacts with STAT3. Interacts with CLU (secreted form); this interaction may act as an important modulator during neuronal differentiation. In terms of processing, N-terminal palmitoylation promotes specific anchoring to the cytosolic leaflet of Golgi membranes and subsequent vesicular trafficking along dendrites and axons. Neuronal Stathmins are substrates for palmitoyltransferases ZDHHC3, ZDHHC7 and ZDHHC15.

It is found in the golgi apparatus. It localises to the cell projection. The protein resides in the growth cone. The protein localises to the axon. Its subcellular location is the cytoplasm. It is found in the cytosol. In terms of biological role, exhibits microtubule-destabilizing activity, which is antagonized by STAT3. The chain is Stathmin-3 (STMN3) from Macaca fascicularis (Crab-eating macaque).